Consider the following 458-residue polypeptide: tRNA-2-methylthio-N(6)-dimethylallyladenosine synthase (458 aa).

The MTTase N-terminal domain maps to 15–134 (KKVFIKTYGC…LPDLLEQTKQ (120 aa)). The [4Fe-4S] cluster site is built by Cys24, Cys60, Cys97, Cys175, Cys179, and Cys182. Residues 161 to 393 (RKRGVSAFLT…QVLLLEQQNA (233 aa)) form the Radical SAM core domain. In terms of domain architecture, TRAM spans 396–457 (RSKIGQTTDV…SNSFVGEMTN (62 aa)).

The protein belongs to the methylthiotransferase family. MiaB subfamily. Monomer. The cofactor is [4Fe-4S] cluster.

The protein resides in the cytoplasm. The enzyme catalyses N(6)-dimethylallyladenosine(37) in tRNA + (sulfur carrier)-SH + AH2 + 2 S-adenosyl-L-methionine = 2-methylsulfanyl-N(6)-dimethylallyladenosine(37) in tRNA + (sulfur carrier)-H + 5'-deoxyadenosine + L-methionine + A + S-adenosyl-L-homocysteine + 2 H(+). Functionally, catalyzes the methylthiolation of N6-(dimethylallyl)adenosine (i(6)A), leading to the formation of 2-methylthio-N6-(dimethylallyl)adenosine (ms(2)i(6)A) at position 37 in tRNAs that read codons beginning with uridine. The chain is tRNA-2-methylthio-N(6)-dimethylallyladenosine synthase from Bartonella henselae (strain ATCC 49882 / DSM 28221 / CCUG 30454 / Houston 1) (Rochalimaea henselae).